The primary structure comprises 109 residues: Thioredoxin (109 aa).

Residues 2-109 (ETLLWKDARE…LVEKIKELFK (108 aa)) enclose the Thioredoxin domain. A disulfide bridge links C27 with C30.

This sequence belongs to the thioredoxin family.

In terms of biological role, participates in various redox reactions through the reversible oxidation of its active center dithiol to a disulfide and catalyzes dithiol-disulfide exchange reactions. The sequence is that of Thioredoxin (trxA) from Mycoplasmopsis pulmonis (strain UAB CTIP) (Mycoplasma pulmonis).